A 505-amino-acid chain; its full sequence is 2,3-bisphosphoglycerate-independent phosphoglycerate mutase (505 aa).

D12 and S62 together coordinate Mn(2+). The active-site Phosphoserine intermediate is S62. Substrate-binding positions include H123, 153–154 (RD), R185, R191, 257–260 (RPDR), and K330. Residues D397, H401, D438, H439, and H456 each coordinate Mn(2+).

This sequence belongs to the BPG-independent phosphoglycerate mutase family. Monomer. Mn(2+) is required as a cofactor.

The enzyme catalyses (2R)-2-phosphoglycerate = (2R)-3-phosphoglycerate. It functions in the pathway carbohydrate degradation; glycolysis; pyruvate from D-glyceraldehyde 3-phosphate: step 3/5. In terms of biological role, catalyzes the interconversion of 2-phosphoglycerate and 3-phosphoglycerate. The chain is 2,3-bisphosphoglycerate-independent phosphoglycerate mutase from Staphylococcus epidermidis (strain ATCC 35984 / DSM 28319 / BCRC 17069 / CCUG 31568 / BM 3577 / RP62A).